The sequence spans 542 residues: MLGHRLLPSLDFPAVSEGYKPEHDMSPNKDASSLNSSAAGLVCLPPVSEELQLVWTQAIQTSELDGNEHLLQAFSYFPYPSLADIALLCLRHGLQMEKVKTWFMAQRLRCGISWSSEEIEETRARVVYHRDQLLFKSLLSFTQQSVRPPQERPPVLRPEQVALGLSPLAPSEQPTHMKGLKVEPEEPSQVSQLPLNHQNAKEPLMMGSRTFSHQSDCQDLQISGLSKEQAGRGPDQSCGKTASWNHFTAVHQPDKPASVSLLDNSCKEESEPSGIPPSSSTSSPSFQALANGTTATPKPLQPLGCISQSLSPSKKALSPQVEPLWPQRLWNNSEPNSAGPTEYLSPDMQHQRKTKRKTKEQLAILKSFFLQCQWARREDYHKLEQITGLPRPEIIQWFGDTRYALKHGQLKWFRDNAVLGTPSFQDPAIPTPSTRSLKEWAKTPPLPAPPPPPDIRPLEKYWAAHQQLQEADILKLSQASRLSTQQVLDWFDSRLPKPAEVVVCLDEEDEEDEEDELPEDGEEEEEEEEDDDDGDDDVIIWD.

A DNA-binding region (homeobox 1) is located at residues 55 to 114 (WTQAIQTSELDGNEHLLQAFSYFPYPSLADIALLCLRHGLQMEKVKTWFMAQRLRCGISW). Residues 165–193 (LSPLAPSEQPTHMKGLKVEPEEPSQVSQL) form a disordered region. Residues Lys181 and Lys201 each participate in a glycyl lysine isopeptide (Lys-Gly) (interchain with G-Cter in SUMO2) cross-link. The segment at 250 to 307 (VHQPDKPASVSLLDNSCKEESEPSGIPPSSSTSSPSFQALANGTTATPKPLQPLGCIS) is disordered. Residues 272 to 285 (PSGIPPSSSTSSPS) show a composition bias toward low complexity. The segment covering 286 to 296 (FQALANGTTAT) has biased composition (polar residues). A Phosphoserine modification is found at Ser345. 2 DNA-binding regions (homeobox) span residues 349–409 (QHQR…KHGQ) and 443–502 (TPPL…AEVV). Residues 352 to 357 (RKTKRK) carry the Nuclear localization signal motif. 2 disordered regions span residues 424-454 (FQDP…PPPD) and 501-542 (VVVC…IIWD). Thr443 carries the post-translational modification Phosphothreonine. The span at 444 to 454 (PPLPAPPPPPD) shows a compositional bias: pro residues. The span at 505-542 (LDEEDEEDEEDELPEDGEEEEEEEEDDDDGDDDVIIWD) shows a compositional bias: acidic residues.

Homodimer or heterodimer (Potential). Interacts with HOXC8. As to expression, ubiquitous. Strongly expressed in testis.

It localises to the nucleus. Its function is as follows. May function as a transcriptional regulator. In Mus musculus (Mouse), this protein is Homeobox and leucine zipper protein Homez (Homez).